Reading from the N-terminus, the 350-residue chain is Probable dTDP-glucose 4,6-dehydratase (350 aa).

7–13 (GGAGFIG) lines the NAD(+) pocket. Thr-132 lines the substrate pocket. Asp-133 functions as the Proton donor in the catalytic mechanism. Residues Glu-134 and Tyr-157 each act as proton acceptor in the active site.

The protein belongs to the NAD(P)-dependent epimerase/dehydratase family. dTDP-glucose dehydratase subfamily. NAD(+) is required as a cofactor.

It catalyses the reaction dTDP-alpha-D-glucose = dTDP-4-dehydro-6-deoxy-alpha-D-glucose + H2O. It participates in carbohydrate biosynthesis; dTDP-L-rhamnose biosynthesis. This is Probable dTDP-glucose 4,6-dehydratase from Sinorhizobium fredii (strain NBRC 101917 / NGR234).